We begin with the raw amino-acid sequence, 765 residues long: ATP-dependent zinc metalloprotease FtsH (765 aa).

Topologically, residues 1–27 (MSNTSNFNERVTENAKPPKNVKSIIWK) are cytoplasmic. A helical membrane pass occupies residues 28 to 48 (TIGIIIVMAIIIGLILFYVLP). Topologically, residues 49–213 (RNTIANISNI…NVQLPNQSTA (165 aa)) are extracellular. A helical membrane pass occupies residues 214–234 (ILTQFLTSIIPFVILIVIYIV). Residues 235–765 (IARRFSRTMG…EPTASTASSN (531 aa)) lie on the Cytoplasmic side of the membrane. 314 to 321 (GPPGTGKT) contributes to the ATP binding site. Histidine 536 contacts Zn(2+). Glutamate 537 is a catalytic residue. The Zn(2+) site is built by histidine 540 and aspartate 615. Over residues 730–748 (KAAAEKEEQAEKAKLDHQS) the composition is skewed to basic and acidic residues. Residues 730 to 765 (KAAAEKEEQAEKAKLDHQSDSAQPQEEPTASTASSN) form a disordered region. A compositionally biased stretch (polar residues) spans 749 to 765 (DSAQPQEEPTASTASSN).

The protein in the central section; belongs to the AAA ATPase family. This sequence in the C-terminal section; belongs to the peptidase M41 family. As to quaternary structure, homohexamer. Zn(2+) is required as a cofactor.

Its subcellular location is the cell membrane. Its function is as follows. Acts as a processive, ATP-dependent zinc metallopeptidase for both cytoplasmic and membrane proteins. Plays a role in the quality control of integral membrane proteins. The polypeptide is ATP-dependent zinc metalloprotease FtsH (Mycoplasmoides gallisepticum (strain R(high / passage 156)) (Mycoplasma gallisepticum)).